Reading from the N-terminus, the 173-residue chain is Chromophore lyase CpcS/CpeS 3 (173 aa).

The protein belongs to the CpcS/CpeS biliprotein lyase family.

Its function is as follows. Covalently attaches a chromophore to Cys residue(s) of phycobiliproteins. The polypeptide is Chromophore lyase CpcS/CpeS 3 (Trichodesmium erythraeum (strain IMS101)).